Reading from the N-terminus, the 51-residue chain is Sec-independent protein translocase protein TatA (51 aa).

A helical transmembrane segment spans residues 1–21 (MGMSFSHLLIILLIIFVLFGA).

Belongs to the TatA/E family. In terms of assembly, the Tat system comprises two distinct complexes: a TatABC complex, containing multiple copies of TatA, TatB and TatC subunits, and a separate TatA complex, containing only TatA subunits. Substrates initially bind to the TatABC complex, which probably triggers association of the separate TatA complex to form the active translocon.

It is found in the cell inner membrane. Functionally, part of the twin-arginine translocation (Tat) system that transports large folded proteins containing a characteristic twin-arginine motif in their signal peptide across membranes. TatA could form the protein-conducting channel of the Tat system. This chain is Sec-independent protein translocase protein TatA, found in Rickettsia bellii (strain RML369-C).